We begin with the raw amino-acid sequence, 156 residues long: Small ribosomal subunit protein uS7 (156 aa).

The protein belongs to the universal ribosomal protein uS7 family. Part of the 30S ribosomal subunit. Contacts proteins S9 and S11.

Functionally, one of the primary rRNA binding proteins, it binds directly to 16S rRNA where it nucleates assembly of the head domain of the 30S subunit. Is located at the subunit interface close to the decoding center, probably blocks exit of the E-site tRNA. The sequence is that of Small ribosomal subunit protein uS7 from Mycobacterium leprae (strain TN).